The primary structure comprises 93 residues: Toxin RelE1 (93 aa).

It belongs to the RelE toxin family.

Toxic component of a type II toxin-antitoxin (TA) system. Its toxic effect is neutralized by coexpression with cognate antitoxin RelB1 but no other ParD or RelB antitoxin. This Caulobacter vibrioides (strain ATCC 19089 / CIP 103742 / CB 15) (Caulobacter crescentus) protein is Toxin RelE1 (relE1).